Reading from the N-terminus, the 776-residue chain is Transferrin receptor protein 1 (776 aa).

The Cytoplasmic portion of the chain corresponds to 1–70; it reads MDHARAALSN…QPQRNGKRLC (70 aa). An Endocytosis signal motif is present at residues 19–22; it reads YTRF. Ser23 carries the phosphoserine modification. Cys70 carries the S-palmitoyl cysteine lipid modification. A helical; Signal-anchor for type II membrane protein membrane pass occupies residues 71-91; sequence FLVIAAVLLLLIGFLIGYLSY. The Extracellular segment spans residues 92–776; it reads RGRIELAARC…GDIWETDNEF (685 aa). The 93-residue stretch at 230–322 folds into the PA domain; the sequence is SESGSVSGKP…GTGDPYTPGF (93 aa). N-linked (GlcNAc...) asparagine glycosylation is found at Asn261, Asn326, and Asn391. A ligand-binding region spans residues 586 to 776; it reads KGDTLENLRK…GDIWETDNEF (191 aa). The short motif at 662–664 is the Cell attachment site element; the sequence is RGD. N-linked (GlcNAc...) asparagine glycosylation occurs at Asn738.

It belongs to the peptidase M28 family. M28B subfamily. As to quaternary structure, homodimer; disulfide-linked. Binds one transferrin molecule per subunit. Post-translationally, stearoylated. Stearoylation does not affect iron uptake. N- and O-glycosylated, phosphorylated and palmitoylated.

It localises to the cell membrane. Its subcellular location is the melanosome. Cellular uptake of iron occurs via receptor-mediated endocytosis of ligand-occupied transferrin receptor into specialized endosomes. Endosomal acidification leads to iron release. The apotransferrin-receptor complex is then recycled to the cell surface with a return to neutral pH and the concomitant loss of affinity of apotransferrin for its receptor. Transferrin receptor is necessary for development of erythrocytes and the nervous system. Acts as a lipid sensor that regulates mitochondrial fusion by regulating activation of the JNK pathway. When dietary levels of stearate (C18:0) are low, promotes activation of the JNK pathway, resulting in HUWE1-mediated ubiquitination and subsequent degradation of the mitofusin MFN2 and inhibition of mitochondrial fusion. When dietary levels of stearate (C18:0) are high, TFRC stearoylation inhibits activation of the JNK pathway and thus degradation of the mitofusin MFN2. Mediates uptake of NICOL1 into fibroblasts where it may regulate extracellular matrix production. In Gallus gallus (Chicken), this protein is Transferrin receptor protein 1 (TFRC).